A 100-amino-acid chain; its full sequence is Small ribosomal subunit protein uS14c (100 aa).

It belongs to the universal ribosomal protein uS14 family. In terms of assembly, part of the 30S ribosomal subunit.

It localises to the plastid. The protein localises to the chloroplast. Functionally, binds 16S rRNA, required for the assembly of 30S particles. This chain is Small ribosomal subunit protein uS14c, found in Cyanidioschyzon merolae (strain NIES-3377 / 10D) (Unicellular red alga).